A 284-amino-acid polypeptide reads, in one-letter code: Ermin (284 aa).

Residues 1–61 (MTDVPATFTQ…APTKGSQEER (61 aa)) are disordered. Residue S73 is modified to Phosphoserine. Residues 108–251 (TFREGRQWEK…PTLGKKSDIS (144 aa)) are disordered. Basic and acidic residues-rich tracts occupy residues 126-140 (EIRRQKERITEQPLK) and 171-183 (LHSKHDEEQKVWD). The segment covering 184–200 (EEIDDDDDDNCNDDEDE) has biased composition (acidic residues). Residues 201–220 (VRVIEFKKKHEEVSQFKEEG) show a composition bias toward basic and acidic residues. Residues S214, S226, S230, and S233 each carry the phosphoserine modification. The segment covering 225 to 235 (DSPLSSASSQA) has biased composition (low complexity). T237 is subject to Phosphothreonine. The interval 265 to 284 (KIRKGNTKQRIDEFESMMHL) is binds actin.

As to quaternary structure, binds actin.

The protein resides in the cytoplasm. Its subcellular location is the cytoskeleton. Its function is as follows. Plays a role in cytoskeletal rearrangements during the late wrapping and/or compaction phases of myelinogenesis as well as in maintenance and stability of myelin sheath in the adult. May play an important role in late-stage oligodendroglia maturation, myelin/Ranvier node formation during CNS development, and in the maintenance and plasticity of related structures in the mature CNS. The chain is Ermin (ERMN) from Pongo abelii (Sumatran orangutan).